A 265-amino-acid polypeptide reads, in one-letter code: SPbeta prophage-derived uncharacterized protein YomU (265 aa).

The interval 238–265 (KADGTKGVVTSDEGTGSSQSSDLGGTTE) is disordered. The segment covering 249–265 (DEGTGSSQSSDLGGTTE) has biased composition (polar residues).

The protein is SPbeta prophage-derived uncharacterized protein YomU (yomU) of Bacillus subtilis (strain 168).